The sequence spans 433 residues: MRNLLRGMLVVICCMAGIAAADEKNILVTSGSDRATPIAVVPFGWQGGSVLPDDMAQIVSDDLRNSGYYAPIPKGNMISQPNQASEVVFRDWKAVGAQYLMVGNITPAGGRLQIQYTLFNVATEQQVLTGSVSGTAEQLRDMAHYISDQSFEKLTGIKGAFSTRLLYVTAERFSVDNTRYTLQRSDYDGARAVTLLQSREPILSPRFAPDGKRIAYVSFEQRRPRIFVQHIDTGRREQITNFEGLNGAPAWSPDGSRLAFVLSKDGNPDIYVMNMASRQISRVTSGPGINTEPFWGKDGSTIYFTSDRGGKPQVYKANVNGGGAERVTFIGNYNANPKLSADEKTLVMIHRQDGFTNFRVAAQDLQRGTVKILTDTNLDESATVAPNGTMVIYATRQQGRGVLMLVSINGRVRLPLPTAQGEVREPSWSPYLN.

An N-terminal signal peptide occupies residues 1 to 21 (MRNLLRGMLVVICCMAGIAAA).

The protein belongs to the TolB family. In terms of assembly, the Tol-Pal system is composed of five core proteins: the inner membrane proteins TolA, TolQ and TolR, the periplasmic protein TolB and the outer membrane protein Pal. They form a network linking the inner and outer membranes and the peptidoglycan layer.

The protein localises to the periplasm. In terms of biological role, part of the Tol-Pal system, which plays a role in outer membrane invagination during cell division and is important for maintaining outer membrane integrity. The protein is Tol-Pal system protein TolB of Pseudomonas fluorescens (strain SBW25).